Reading from the N-terminus, the 75-residue chain is Defensin-like protein 58 (75 aa).

The first 23 residues, 1-23 (MNITKRYVVIFFLVMLTKSLSNS), serve as a signal peptide directing secretion. Cystine bridges form between C39–C73, C43–C66, C52–C71, and C56–C72.

It belongs to the DEFL family.

It localises to the secreted. This chain is Defensin-like protein 58, found in Arabidopsis thaliana (Mouse-ear cress).